Reading from the N-terminus, the 499-residue chain is Protein phosphatase PP2A 55 kDa regulatory subunit (499 aa).

The disordered stretch occupies residues 1–30; sequence MGRWGRQSPVLEPPDPQMQTTPPPPTLPPR. Positions 11–28 are enriched in pro residues; that stretch reads LEPPDPQMQTTPPPPTLP. WD repeat units follow at residues 79 to 118, 144 to 185, 228 to 266, 277 to 317, 336 to 374, 391 to 432, and 467 to 498; these read TDADIISCVEFNHDGELLATGDKGGRVVIFQRDPASKAAN, EIEE…KSFG, AHTYHINSISVNSDQETFLSADDLRINLWHLEVVNQSYN, ELTE…LCDR, EIISSISDVKLSNSGRYMISRDYLSIKVWDLHMETKPIE, ENDC…DVTL, and DFNKKILHTAWHPEENIIAVAATNNLFIFQDK.

The protein belongs to the phosphatase 2A regulatory subunit B family. As to quaternary structure, PP2A exists in several trimeric forms, all of which consist of a core composed of a catalytic subunit associated with a 65 kDa regulatory subunit (PR65) (subunit A). The core complex associates with a third, variable subunit (subunit B), which confers distinct properties to the holoenzyme.

Functionally, could perform a substrate recognition function or could be responsible for targeting the enzyme complex to the appropriate subcellular compartment. This Drosophila melanogaster (Fruit fly) protein is Protein phosphatase PP2A 55 kDa regulatory subunit (tws).